The following is a 1023-amino-acid chain: 2-oxoglutarate dehydrogenase complex component E1 (1023 aa).

A mitochondrion-targeting transit peptide spans 1–40; sequence MFHLRTCAAKLRPLTASQTVKTFSQNRPAAARTFQQIRCY. Lysine 74 is modified (N6-succinyllysine). The residue at position 100 (serine 100) is a Phosphoserine. Positions 143, 156, and 158 each coordinate Ca(2+). Arginine 312 is a thiamine diphosphate binding site. Lysine 401 carries the N6-acetyllysine modification. Thiamine diphosphate contacts are provided by aspartate 411, asparagine 444, and isoleucine 446. Mg(2+)-binding residues include aspartate 411, asparagine 444, and isoleucine 446. Residue lysine 534 forms a Glycyl lysine isopeptide (Lys-Gly) (interchain with G-Cter in ubiquitin) linkage. Lysine 564 bears the N6-succinyllysine mark. Position 676 (glutamine 676) interacts with thiamine diphosphate. Lysine 970 carries the N6-acetyllysine modification.

It belongs to the alpha-ketoglutarate dehydrogenase family. Homodimer. The 2-oxoglutarate dehydrogenase complex is composed of OGDH (2-oxoglutarate dehydrogenase; E1), DLST (dihydrolipoamide succinyltransferase; E2), DLD (dihydrolipoamide dehydrogenase; E3) and the assembly factor KGD4. It contains multiple copies of the three enzymatic components (E1, E2 and E3). In the nucleus, the 2-oxoglutarate dehydrogenase complex associates with KAT2A. Interacts with ABHD11; this interaction maintains the functional lipoylation of the 2-oxoglutarate dehydrogenase complex. Thiamine diphosphate is required as a cofactor. Mg(2+) serves as cofactor.

The protein localises to the mitochondrion. The protein resides in the nucleus. The enzyme catalyses N(6)-[(R)-lipoyl]-L-lysyl-[protein] + 2-oxoglutarate + H(+) = N(6)-[(R)-S(8)-succinyldihydrolipoyl]-L-lysyl-[protein] + CO2. With respect to regulation, calcium ions and ADP stimulate, whereas ATP and NADH reduce catalytic activity. Functionally, 2-oxoglutarate dehydrogenase (E1o) component of the 2-oxoglutarate dehydrogenase complex (OGDHC). Participates in the first step, rate limiting for the overall conversion of 2-oxoglutarate to succinyl-CoA and CO(2) catalyzed by the whole OGDHC. Catalyzes the irreversible decarboxylation of 2-oxoglutarate (alpha-ketoglutarate) via the thiamine diphosphate (ThDP) cofactor and subsequent transfer of the decarboxylated acyl intermediate on an oxidized dihydrolipoyl group that is covalently amidated to the E2 enzyme (dihydrolipoyllysine-residue succinyltransferase or DLST). Plays a key role in the Krebs (citric acid) cycle, which is a common pathway for oxidation of fuel molecules, including carbohydrates, fatty acids, and amino acids. Can catalyze the decarboxylation of 2-oxoadipate in vitro, but at a much lower rate than 2-oxoglutarate. Mainly active in the mitochondrion. A fraction of the 2-oxoglutarate dehydrogenase complex also localizes in the nucleus and is required for lysine succinylation of histones: associates with KAT2A on chromatin and provides succinyl-CoA to histone succinyltransferase KAT2A. The polypeptide is 2-oxoglutarate dehydrogenase complex component E1 (Pongo abelii (Sumatran orangutan)).